A 194-amino-acid polypeptide reads, in one-letter code: Putative manganese efflux pump MntP (194 aa).

A run of 6 helical transmembrane segments spans residues 3 to 23 (PITI…AAIG), 37 to 57 (LYVA…GWLL), 65 to 85 (IAAF…IHMI), 112 to 132 (LAAT…SLAF), 137 to 157 (IGIV…FGVM), and 170 to 190 (AEIV…YEHL).

This sequence belongs to the MntP (TC 9.B.29) family.

It localises to the cell inner membrane. Functionally, probably functions as a manganese efflux pump. This is Putative manganese efflux pump MntP from Xylella fastidiosa (strain M12).